A 680-amino-acid polypeptide reads, in one-letter code: Lipase 1 (680 aa).

The signal sequence occupies residues 1 to 34 (MKSQNKYSIRKFSVGASSILIATLLFLSGGQAQA). The propeptide occupies 35–290 (AEKQVNMGNS…AKAKDDQTNK (256 aa)). A disordered region spans residues 82–259 (KNLHNDKTIS…PTKDNDKKNG (178 aa)). Basic and acidic residues predominate over residues 84 to 111 (LHNDKTISEENHRKTDDLNKDQLKDDKN). Polar residues-rich tracts occupy residues 125-138 (KNNN…NQGL), 162-193 (SQDS…SQRE), and 204-223 (QPQQ…FNNE). Over residues 224–234 (QEVKPQKDEKT) the composition is skewed to basic and acidic residues. The span at 235–246 (LSVSDLKNNQKS) shows a compositional bias: polar residues. Ser408 serves as the catalytic Nucleophile. Asp600 functions as the Charge relay system in the catalytic mechanism. Residue Asp638 participates in Ca(2+) binding. Catalysis depends on His639, which acts as the Charge relay system. Asp641, Asp646, and Asp649 together coordinate Ca(2+).

It belongs to the AB hydrolase superfamily. Lipase family.

It is found in the secreted. It carries out the reaction a triacylglycerol + H2O = a diacylglycerol + a fatty acid + H(+). The chain is Lipase 1 (lip1) from Staphylococcus aureus (strain Mu50 / ATCC 700699).